A 30-amino-acid chain; its full sequence is Conotoxin TVIIA (30 aa).

Intrachain disulfides connect C2–C14, C9–C19, and C13–C24. 4-hydroxyproline occurs at positions 10 and 11.

In terms of processing, three different forms of TVIIA exist. Pro-10 and Pro-11 of conotoxin TVIIA are hydroxylated in TVIIA, whereas Pro-10 is not hydroxylated in [Pro10]TVIIA and neither Pro-10 nor Pro-11 are hydroxylated in [Pro10,11]TVIIA. In terms of tissue distribution, expressed by the venom duct.

Its subcellular location is the secreted. In terms of biological role, by structural similarity with conotoxin GS, may inhibit the sodium channel (Nav). No effect was observed upon intracranial injections into mice and intraperitoneal injections into goldfish (25 ug). The polypeptide is Conotoxin TVIIA (Conus tulipa (Fish-hunting cone snail)).